The sequence spans 426 residues: Putative acid phosphatase 1 (426 aa).

The first 18 residues, Met-1–Ala-18, serve as a signal peptide directing secretion. At Gln-19–Trp-388 the chain is on the extracellular side. Residue His-29 is the Nucleophile of the active site. N-linked (GlcNAc...) asparagine glycosylation is found at Asn-37 and Asn-145. Cysteines 133 and 369 form a disulfide. The Proton donor role is filled by Asp-276. N-linked (GlcNAc...) asparagine glycosylation occurs at Asn-380. Residues Ile-389 to Val-409 form a helical membrane-spanning segment. Residues Arg-410–Asn-426 are Cytoplasmic-facing.

This sequence belongs to the histidine acid phosphatase family.

It is found in the membrane. The enzyme catalyses a phosphate monoester + H2O = an alcohol + phosphate. This is Putative acid phosphatase 1 from Caenorhabditis briggsae.